A 266-amino-acid chain; its full sequence is Norfluorocurarine synthase 2 (266 aa).

The region spanning His11–Asn121 is the AB hydrolase-1 domain. Catalysis depends on residues Ser86, Asp216, and His244.

Belongs to the AB hydrolase superfamily. As to quaternary structure, homodimer.

The enzyme catalyses 17-dehydropreakuammicine + H2O = norfluorocurarine + methanol + CO2. It participates in alkaloid biosynthesis. Its function is as follows. Hydrolase involved in the biosynthesis of curare monoterpene indole alkaloids (MIAs), natural products such as diaboline, a pharmacologically active compound used to regulate blood pressure. Curare alkaloids act as animal glycine receptor antagonists. Catalyzes the conversion of dehydropreakuammicine to norfluorocurarine. The polypeptide is Norfluorocurarine synthase 2 (Strychnos sp).